A 160-amino-acid chain; its full sequence is MKTIIAVTIFGILTCAYAAEGDDCSIEKAMGDFKPEEFFNGTWYLAHGPGVTSPAVCQKFTTSGSKGFTQIVEIGYNKFESNVKFQCNQVDNKNGEQYSFKCKSSDNTEFEADFTFISVSYDNFALVCRSITFTSQPKEDDYLVLERTKSDTDPDAKEIC.

A signal peptide spans 1–18 (MKTIIAVTIFGILTCAYA). 3 disulfides stabilise this stretch: Cys24-Cys128, Cys57-Cys160, and Cys87-Cys102.

It belongs to the calycin superfamily. Triabin family. In terms of tissue distribution, expressed in salivary glands.

It localises to the secreted. In terms of biological role, thrombin inhibitor. Forms a non-covalent complex with thrombin at a molar ratio of 1:1. Inhibits thrombin-induced platelet aggregation. Prolongs thrombin clotting time and activated partial thromboplastin time. It only minimally suppresses the amidolytic activity of thrombin. Inhibits thrombin-mediated fibrin formation in the host. Inhibits thrombin-induced endothelium-dependent relaxant and contractile responses in host blood vessels. Inhibits thrombin-induced mitogenesis in host vascular smooth muscle cells. This chain is Triabin, found in Meccus pallidipennis (Triatomine bug).